We begin with the raw amino-acid sequence, 447 residues long: MTTILKHLPAGQRIGIAFSGGLDTSAALLWMRQKGAVPYAYTANLGQPDEDDYDAIPRRAMEYGAENARLIDCRKQLVAEGIAAIQCGAFHNTTGGLTYFNTTPLGRAVTGTMLVAAMKEDGVNIWGDGSTYKGNDIERFYRYGLLTNAELQIYKPWLDTDFIDELGGRHEMSEFMIACGFDYKMSVEKAYSTDSNMLGATHEAKDLEFLNSSVKIVNPIMGVKFWDESVKIPAEEVTVRFEQGHPVALNGKTFSDDVEMMLEANRIGGRHGLGMSDQIENRIIEAKSRGIYEAPGMALLHIAYERLLTGIHNEDTIEQYHSHGRQLGKLLYQGRWFDSQALMLRDGLQRWVASQITGEVTLELRRGNDYSILNTVSDNLTYKPERLTMEKGESVFSPDDRIGQLTMRNLDITDTREKLFGYAKAGLLTASSATGLPQVENLENKGK.

ATP is bound by residues Ala-17–Ser-25 and Ala-43. Tyr-99 serves as a coordination point for L-citrulline. ATP is bound by residues Gly-129 and Thr-131. Residues Thr-131, Asn-135, and Asp-136 each coordinate L-aspartate. An L-citrulline-binding site is contributed by Asn-135. Asp-136 is an ATP binding site. Residues Arg-139 and Ser-192 each contribute to the L-citrulline site. Position 194 (Asp-194) interacts with ATP. Residues Thr-201, Glu-203, and Glu-280 each contribute to the L-citrulline site.

The protein belongs to the argininosuccinate synthase family. Type 2 subfamily. Homotetramer.

The protein resides in the cytoplasm. It catalyses the reaction L-citrulline + L-aspartate + ATP = 2-(N(omega)-L-arginino)succinate + AMP + diphosphate + H(+). It functions in the pathway amino-acid biosynthesis; L-arginine biosynthesis; L-arginine from L-ornithine and carbamoyl phosphate: step 2/3. The chain is Argininosuccinate synthase from Salmonella newport (strain SL254).